The primary structure comprises 360 residues: Protein Wnt-2 (360 aa).

The signal sequence occupies residues 1 to 25 (MNAPLGGIWLWLPLLLTWLTPEVNS). 11 disulfide bridges follow: Cys76-Cys87, Cys127-Cys135, Cys137-Cys157, Cys206-Cys220, Cys208-Cys215, Cys278-Cys309, Cys294-Cys304, Cys308-Cys348, Cys324-Cys339, Cys326-Cys336, and Cys331-Cys332. A lipid anchor (O-palmitoleoyl serine; by PORCN) is attached at Ser212. Residue Asn295 is glycosylated (N-linked (GlcNAc...) asparagine).

This sequence belongs to the Wnt family. Post-translationally, palmitoleoylation is required for efficient binding to frizzled receptors. Depalmitoleoylation leads to Wnt signaling pathway inhibition.

The protein localises to the secreted. It localises to the extracellular space. The protein resides in the extracellular matrix. In terms of biological role, ligand for members of the frizzled family of seven transmembrane receptors. Functions in the canonical Wnt signaling pathway that results in activation of transcription factors of the TCF/LEF family. Functions as a upstream regulator of FGF10 expression. Plays an important role in embryonic lung development. May contribute to embryonic brain development by regulating the proliferation of dopaminergic precursors and neurons. This is Protein Wnt-2 (WNT2) from Nomascus leucogenys (Northern white-cheeked gibbon).